We begin with the raw amino-acid sequence, 287 residues long: Bifunctional protein FolD (287 aa).

NADP(+) is bound by residues 168-170 (GRS), S193, and I234.

It belongs to the tetrahydrofolate dehydrogenase/cyclohydrolase family. In terms of assembly, homodimer.

It catalyses the reaction (6R)-5,10-methylene-5,6,7,8-tetrahydrofolate + NADP(+) = (6R)-5,10-methenyltetrahydrofolate + NADPH. The enzyme catalyses (6R)-5,10-methenyltetrahydrofolate + H2O = (6R)-10-formyltetrahydrofolate + H(+). Its pathway is one-carbon metabolism; tetrahydrofolate interconversion. In terms of biological role, catalyzes the oxidation of 5,10-methylenetetrahydrofolate to 5,10-methenyltetrahydrofolate and then the hydrolysis of 5,10-methenyltetrahydrofolate to 10-formyltetrahydrofolate. In Clostridioides difficile (strain 630) (Peptoclostridium difficile), this protein is Bifunctional protein FolD.